A 428-amino-acid polypeptide reads, in one-letter code: Aminotransferase verI (428 aa).

An N6-(pyridoxal phosphate)lysine modification is found at K254.

Belongs to the class-I pyridoxal-phosphate-dependent aminotransferase family. Pyridoxal 5'-phosphate serves as cofactor.

It functions in the pathway mycotoxin biosynthesis. Its function is as follows. Aminotransferase; part of the gene cluster that mediates the biosynthesis of 11'-deoxyverticillin A, one of the dimeric epipolythiodioxopiperazines (ETPs) from the verticillin family that act as mycotoxins. 11'-deoxyverticillin A is required for normal conidiation. The nonribosomal peptide synthetase verP is speculated to be responsible for condensation of amino acids to form the carbon skeleton of verticillin, whereas the cluster-specific tailoring enzymes are involved in further modifications leading to the production of 11'-deoxyverticillin A. In Clonostachys rogersoniana, this protein is Aminotransferase verI.